The following is a 348-amino-acid chain: Ketol-acid reductoisomerase (NADP(+)) (348 aa).

Positions 1–179 constitute a KARI N-terminal Rossmann domain; that stretch reads MDVHYDADPA…GGTHAGVIET (179 aa). Residues 22–25, arginine 45, serine 48, serine 50, and 80–83 each bind NADP(+); these read YGSQ and DQHQ. Histidine 105 is a catalytic residue. Residue glycine 131 coordinates NADP(+). The region spanning 180-325 is the KARI C-terminal knotted domain; it reads TFKDETETDL…QTLRGMMPWL (146 aa). Mg(2+)-binding residues include aspartate 188, glutamate 192, glutamate 224, and glutamate 228. Residue serine 249 participates in substrate binding. Residues 323–348 are disordered; it reads PWLNGDETSADEDAPDAADTAPASSS. Low complexity predominate over residues 339 to 348; sequence AADTAPASSS.

It belongs to the ketol-acid reductoisomerase family. Mg(2+) serves as cofactor.

The catalysed reaction is (2R)-2,3-dihydroxy-3-methylbutanoate + NADP(+) = (2S)-2-acetolactate + NADPH + H(+). The enzyme catalyses (2R,3R)-2,3-dihydroxy-3-methylpentanoate + NADP(+) = (S)-2-ethyl-2-hydroxy-3-oxobutanoate + NADPH + H(+). It functions in the pathway amino-acid biosynthesis; L-isoleucine biosynthesis; L-isoleucine from 2-oxobutanoate: step 2/4. It participates in amino-acid biosynthesis; L-valine biosynthesis; L-valine from pyruvate: step 2/4. Functionally, involved in the biosynthesis of branched-chain amino acids (BCAA). Catalyzes an alkyl-migration followed by a ketol-acid reduction of (S)-2-acetolactate (S2AL) to yield (R)-2,3-dihydroxy-isovalerate. In the isomerase reaction, S2AL is rearranged via a Mg-dependent methyl migration to produce 3-hydroxy-3-methyl-2-ketobutyrate (HMKB). In the reductase reaction, this 2-ketoacid undergoes a metal-dependent reduction by NADPH to yield (R)-2,3-dihydroxy-isovalerate. This is Ketol-acid reductoisomerase (NADP(+)) from Salinibacter ruber (strain DSM 13855 / M31).